Reading from the N-terminus, the 142-residue chain is Large ribosomal subunit protein uL11 (142 aa).

This sequence belongs to the universal ribosomal protein uL11 family. Part of the ribosomal stalk of the 50S ribosomal subunit. Interacts with L10 and the large rRNA to form the base of the stalk. L10 forms an elongated spine to which L12 dimers bind in a sequential fashion forming a multimeric L10(L12)X complex. One or more lysine residues are methylated.

In terms of biological role, forms part of the ribosomal stalk which helps the ribosome interact with GTP-bound translation factors. This Rhodopseudomonas palustris (strain BisA53) protein is Large ribosomal subunit protein uL11.